The primary structure comprises 274 residues: Copper chaperone for superoxide dismutase (274 aa).

The HMA domain occupies Ala11 to Val74. Residues Cys22 and Cys25 each contribute to the Cu cation site. Lys76 is covalently cross-linked (Glycyl lysine isopeptide (Lys-Gly) (interchain with G-Cter in ubiquitin)). The tract at residues Ala88 to Ala234 is superoxide dismutase-like. An intrachain disulfide couples Cys141 to Cys227. The Zn(2+) site is built by His147, His155, His164, and Asp167. Residues Lys189, Lys216, and Lys241 each participate in a glycyl lysine isopeptide (Lys-Gly) (interchain with G-Cter in ubiquitin) cross-link. Cu cation contacts are provided by Cys244 and Cys246.

The protein in the C-terminal section; belongs to the Cu-Zn superoxide dismutase family. In terms of assembly, homodimer, and heterodimer with SOD1. Interacts with COMMD1. Interacts with XIAP/BIRC4. Interacts with SLC31A1(via C-terminal domain); this interaction is Cu(1+)-mediated. The heterodimer CCS:SOD1 interacts with SLC31A1; this heterotrimer is Cu(1+)-mediated and its maintenance is regulated through SOD1 activation. It depends on Cu(2+) as a cofactor. Zn(2+) serves as cofactor. Post-translationally, ubiquitinion by XIAP/BIRC4 leads to enhancement of its chaperone activity toward its physiologic target, SOD1, rather than proteasomal degradation. XIAP/BIRC4 preferentially ubiquitinates at Lys-241.

The protein localises to the cytoplasm. Delivers copper to copper zinc superoxide dismutase (SOD1). This chain is Copper chaperone for superoxide dismutase, found in Sus scrofa (Pig).